The following is an 878-amino-acid chain: Phosphoenolpyruvate carboxylase (878 aa).

Catalysis depends on residues His-138 and Lys-544.

The protein belongs to the PEPCase type 1 family. Mg(2+) serves as cofactor.

It carries out the reaction oxaloacetate + phosphate = phosphoenolpyruvate + hydrogencarbonate. Its function is as follows. Forms oxaloacetate, a four-carbon dicarboxylic acid source for the tricarboxylic acid cycle. This is Phosphoenolpyruvate carboxylase from Psychromonas ingrahamii (strain DSM 17664 / CCUG 51855 / 37).